The primary structure comprises 202 residues: Tetratricopeptide repeat protein 36 (202 aa).

3 TPR repeats span residues 49–82, 83–116, and 121–154; these read AQDL…LPER, ASAY…SGIA, and RQAL…GSDF.

The protein belongs to the TTC36 family.

The chain is Tetratricopeptide repeat protein 36 (ttc36) from Xenopus tropicalis (Western clawed frog).